Reading from the N-terminus, the 348-residue chain is Trace amine-associated receptor 9 (348 aa).

Residues 1-33 are Extracellular-facing; sequence MTSDFSPEPPMELCYENVNGSCIKSSYAPWPRA. The N-linked (GlcNAc...) asparagine glycan is linked to asparagine 19. Disulfide bonds link cysteine 22-cysteine 186 and cysteine 105-cysteine 190. The chain crosses the membrane as a helical span at residues 34–58; that stretch reads ILYGVLGLGALLAVFGNLLVIIAIL. Topologically, residues 59 to 68 are cytoplasmic; sequence HFKQLHTPTN. A helical membrane pass occupies residues 69 to 90; it reads FLVASLACADFLVGVTVMPFST. Residues 91–105 lie on the Extracellular side of the membrane; sequence VRSVESCWYFGESYC. A helical membrane pass occupies residues 106 to 128; that stretch reads KFHTCFDTSFCFASLFHLCCISI. Spermidine contacts are provided by aspartate 112 and threonine 113. Topologically, residues 129–148 are cytoplasmic; sequence DRYIAVTDPLTYPTKFTVSV. Residues 149–170 traverse the membrane as a helical segment; it reads SGLCIALSWFFSVTYSFSIFYT. Topologically, residues 171–196 are extracellular; it reads GANEEGIEELVVALTCVGGCQAPLNQ. The segment at 174-187 is extracellular Loop 2 (ECL2); sequence EEGIEELVVALTCV. Residues 197–218 traverse the membrane as a helical segment; that stretch reads NWVLLCFLLFFLPTVVMVFLYG. Topologically, residues 219-256 are cytoplasmic; the sequence is RIFLVAKYQARKIEGTANQAQASSESYKERVAKRERKA. Residues 257-280 traverse the membrane as a helical segment; it reads AKTLGIAMAAFLVSWLPYIIDAVI. The Extracellular portion of the chain corresponds to 281 to 293; it reads DAYMNFITPAYVY. The helical transmembrane segment at 294–314 threads the bilayer; sequence EILVWCVYYNSAMNPLIYAFF. The Cytoplasmic segment spans residues 315–348; that stretch reads YPWFRKAIKLIVSGKVFRADSSTTNLFSEEAGAG.

The protein belongs to the G-protein coupled receptor 1 family. In terms of tissue distribution, specifically expressed in neurons of the olfactory epithelium.

The protein localises to the cell membrane. Functionally, olfactory receptor specific for trace amines, such as triethylamine, N,N-dimethylcyclohexylamine (DMCHA), beta-phenylethylamine (beta-PEA), cadaverine (CAD) and polyamines such as spermine and spermidine. Trace amine compounds are enriched in animal body fluids and act on trace amine-associated receptors (TAARs) to elicit both intraspecific and interspecific innate behaviors. Trace amine-binding causes a conformation change that triggers signaling via G(s)-class of G alpha proteins (GNAL or GNAS). In mature olfactory sensory neurons, Taar9 is coupled with GNAL/G(olf)G alpha protein and mediates activation of adenylate cyclase activity to activate cAMP signaling and eventually transmit odorant signals to achieve membrane depolarization. In immature olfactory sensory neurons, Taar9 is coupled with GNAS/G(s) G alpha proteins. This Mus musculus (Mouse) protein is Trace amine-associated receptor 9.